A 165-amino-acid chain; its full sequence is Chaperone protein SicA (165 aa).

This sequence belongs to the LcrH/SycD chaperone family. In terms of assembly, dimer or higher-order oligomers.

The protein localises to the cytoplasm. Functionally, type III secretion-associated chaperone required for SipB and SipC stabilization. Prevents premature association of SipB with SipC, which may lead to their targeting for degradation. Along with InvF, required for transcription activation of sigDE (sopB pipC), sicAsipBCDA, and sopE. In Salmonella dublin, this protein is Chaperone protein SicA (sicA).